A 255-amino-acid chain; its full sequence is Adenosine 5'-phosphosulfate reductase (255 aa).

The tract at residues methionine 1–proline 39 is disordered. 4 residues coordinate [4Fe-4S] cluster: cysteine 137, cysteine 138, cysteine 220, and cysteine 223. The active-site Nucleophile; cysteine thiosulfonate intermediate is the cysteine 246.

This sequence belongs to the PAPS reductase family. CysH subfamily. [4Fe-4S] cluster serves as cofactor.

Its subcellular location is the cytoplasm. It carries out the reaction [thioredoxin]-disulfide + sulfite + AMP + 2 H(+) = adenosine 5'-phosphosulfate + [thioredoxin]-dithiol. It participates in sulfur metabolism; hydrogen sulfide biosynthesis; sulfite from sulfate. Its function is as follows. Catalyzes the formation of sulfite from adenosine 5'-phosphosulfate (APS) using thioredoxin as an electron donor. This Deinococcus radiodurans (strain ATCC 13939 / DSM 20539 / JCM 16871 / CCUG 27074 / LMG 4051 / NBRC 15346 / NCIMB 9279 / VKM B-1422 / R1) protein is Adenosine 5'-phosphosulfate reductase.